The sequence spans 741 residues: Lamin-B receptor (741 aa).

The segment at 29-126 (RLRRPRRTED…TGSGSGSSLP (98 aa)) is disordered. 2 stretches are compositionally biased toward low complexity: residues 57–84 (TRRTGSVTAAGATATATATAGPATRTRA) and 109–126 (PRSSVGPLTGSGSGSSLP). Position 111 is a phosphoserine (Ser-111). Thr-135 carries the post-translational modification Phosphothreonine. Ser-144 carries the phosphoserine modification. Over residues 160-184 (TNTSSGAPNKAFNTSSVNSGNSFSR) the composition is skewed to polar residues. A disordered region spans residues 160–194 (TNTSSGAPNKAFNTSSVNSGNSFSRTTTSSTTTTT). Residues 185-194 (TTTSSTTTTT) are compositionally biased toward low complexity. Phosphoserine occurs at positions 223 and 225. Residues 231-240 (LAGTPVTNTE) show a composition bias toward polar residues. Residues 231 to 277 (LAGTPVTNTEEGSRYSRSVSRSVYDDEKSSKRSYSTGEEDIDEEDEL) form a disordered region. Thr-234 and Thr-237 each carry phosphothreonine. 5 positions are modified to phosphoserine: Ser-243, Ser-246, Ser-248, Ser-250, and Ser-263. Thr-266 bears the Phosphothreonine mark. Positions 267-277 (GEEDIDEEDEL) are enriched in acidic residues. The residue at position 284 (Ser-284) is a Phosphoserine. A Phosphothreonine modification is found at Thr-288. Ser-291 bears the Phosphoserine mark. Thr-293 is subject to Phosphothreonine. Ser-298 carries the post-translational modification Phosphoserine. 8 helical membrane-spanning segments follow: residues 308-328 (FGGWLGAFLFLLLLPTAVYYL), 363-383 (VVGAFAAYQVVVFLLVALLPG), 402-422 (LTLLIASGVAEYLKYPVVTFV), 429-449 (FCIFGLVGAFVAAAWSYWLVD), 497-517 (LSLVTTLIYATCYIYQTLVWP), 543-563 (PATLFSASCLLFYVLDAIIFE), 577-599 (YGCLLLLRYAATPYLLTAVTKYF), and 604-624 (VPISCWYAPLAVAALLSLGLL). Phosphoserine is present on residues Ser-640 and Ser-642. The helical transmembrane segment at 687-707 (MALRPAWPPVLGLSLIILLLL) threads the bilayer.

This sequence belongs to the ERG4/ERG24 family. In terms of assembly, interacts directly with LAM.

The protein localises to the nucleus inner membrane. In terms of biological role, anchors the lamina and the heterochromatin to the inner nuclear membrane. The polypeptide is Lamin-B receptor (Drosophila melanogaster (Fruit fly)).